A 1252-amino-acid chain; its full sequence is Guanine nucleotide exchange factor SDC25 (1252 aa).

The SH3 domain maps to 26 to 97; sequence QPIDVVECTY…PPSFTRSILN (72 aa). Disordered regions lie at residues 409–454 and 623–648; these read IPAS…DTIW and LNLDNAKDKKNGSQNTDIQEEEDEYE. Positions 416–428 are enriched in low complexity; sequence TSCSSETSHHSPS. Positions 782 to 914 constitute an N-terminal Ras-GEF domain; that stretch reads SNNRIKGGSK…LLKEVNQKFK (133 aa). Residues 952–1199 form the Ras-GEF domain; the sequence is DPVLFATQLT…YQLSLIIEPK (248 aa). Residues 1201–1252 form a disordered region; the sequence is RKKVVPNSNSNNKSQEKSRDDQTDEGKTSTKKDRFSKFQLHKTKKKAPKVSK. The span at 1214 to 1236 shows a compositional bias: basic and acidic residues; sequence SQEKSRDDQTDEGKTSTKKDRFS. Basic residues predominate over residues 1239–1252; the sequence is QLHKTKKKAPKVSK.

Functionally, promotes the exchange of Ras-bound GDP by GTP. This is Guanine nucleotide exchange factor SDC25 (SDC25) from Saccharomyces cerevisiae (strain YJM789) (Baker's yeast).